The primary structure comprises 699 residues: MRAIQKKSLCHTSIISCWRRREYSIPPQANFGETFLNEKSSRSHQILRLTVESSAREFLGKDKSTTLVASANFVDLAGSERASQALSAGTRLKEGCHINRSLLALGTVIRKLSMGSNAHIPYRDSKLTRILQPSLGGNARTAIICTLSPATSHIEQSRNTLLFGSCAKEVVTNAQVNVVMSDKALVKHLQKELARLESELRHPVQSSSLETLLKEKDNQIRKMEKEIKELKSQRDLAQSRLQDLLQSVGDHDLNRQVQGKHSVRSPPSVGMPPSVSRDDSSQVSHDDSDLYKEVRCIESNRTGGNDQLDLSAGESSSPQDSNMNSGLHGNDSNASVNSRHSRPSGEAPITLEEHLENIRRPFVSLAKDLGSSTRNSSNLRVIGRSRSCRSLTGSTMFDDMEMDDCTPLNRSLVEFPGRPVESHRRGSALHYDAETDTLSRAGSMSSEISTFKDAKTNGSVACDTEFTGIGEFVAELKEMAQVHYQKQLGDQNANGKSIGLDPIEGVSQSPSRWPLEFEKKQQEIIELWQACSISLVHRTYFFLLFKGEAADSIYMEVELRRLSFLRDTYSRGSTPSNAIVGSLSTSPVASAKKLQREREMLARQMQKRLSTEEREHTYTKWGVSLDSKRRKLQVARRLWTETKDLEHVRESASLVAKLIGLQEPGQVLKEMFGLSFAPQQQPTRRRSSNGWRYGIPSFA.

Residues 1–170 (MRAIQKKSLC…LLFGSCAKEV (170 aa)) form the Kinesin motor domain. Positions 179-247 (VMSDKALVKH…QSRLQDLLQS (69 aa)) form a coiled coil. The disordered stretch occupies residues 249-345 (GDHDLNRQVQ…VNSRHSRPSG (97 aa)). The span at 264 to 275 (RSPPSVGMPPSV) shows a compositional bias: low complexity. A compositionally biased stretch (basic and acidic residues) spans 276 to 298 (SRDDSSQVSHDDSDLYKEVRCIE). The span at 313–338 (GESSSPQDSNMNSGLHGNDSNASVNS) shows a compositional bias: polar residues.

This sequence belongs to the TRAFAC class myosin-kinesin ATPase superfamily. Kinesin family. KIN-7 subfamily.

The sequence is that of Putative inactive kinesin-like protein KIN-7B from Oryza sativa subsp. japonica (Rice).